The primary structure comprises 674 residues: Anosmin-1 (674 aa).

An N-terminal signal peptide occupies residues 1–21 (MVRRAPGASLALLLWVTAVSC). Disulfide bonds link C47–C71, C80–C99, C84–C95, and C110–C114. N65 carries an N-linked (GlcNAc...) asparagine glycan. A WAP domain is found at 121-170 (LSVKQGDCPAPEKASGFAAACFESCEADSECSGVKKCCSNGCGHTCQVPK). 4 Fibronectin type-III domains span residues 180 to 281 (PRKE…SKDP), 286 to 392 (APSN…TTQD), 418 to 515 (RRKP…FFVT), and 545 to 652 (KPEN…DLPP). N-linked (GlcNAc...) asparagine glycans are attached at residues N203 and N294. Residues 388–402 (STTQDNRNNNEQTSV) are compositionally biased toward polar residues. A disordered region spans residues 388–413 (STTQDNRNNNEQTSVEKPPKGVVDPY). 3 N-linked (GlcNAc...) asparagine glycosylation sites follow: N465, N548, and N559. Residues 655–674 (PHRPHLKHHPHRYKPPPEKY) form a disordered region. Basic residues predominate over residues 656-668 (HRPHLKHHPHRYK).

Its subcellular location is the cell surface. In terms of biological role, may be an adhesion-like molecule with anti-protease activity. This chain is Anosmin-1, found in Coturnix japonica (Japanese quail).